A 441-amino-acid polypeptide reads, in one-letter code: NADH-quinone oxidoreductase subunit D (441 aa).

This sequence belongs to the complex I 49 kDa subunit family. NDH-1 is composed of 14 different subunits. Subunits NuoB, C, D, E, F, and G constitute the peripheral sector of the complex.

The protein resides in the cell membrane. The catalysed reaction is a quinone + NADH + 5 H(+)(in) = a quinol + NAD(+) + 4 H(+)(out). In terms of biological role, NDH-1 shuttles electrons from NADH, via FMN and iron-sulfur (Fe-S) centers, to quinones in the respiratory chain. The immediate electron acceptor for the enzyme in this species is believed to be a menaquinone. Couples the redox reaction to proton translocation (for every two electrons transferred, four hydrogen ions are translocated across the cytoplasmic membrane), and thus conserves the redox energy in a proton gradient. This is NADH-quinone oxidoreductase subunit D from Mycobacterium avium (strain 104).